The following is a 418-amino-acid chain: UDP-N-acetylglucosamine 1-carboxyvinyltransferase (418 aa).

Phosphoenolpyruvate is bound at residue 22 to 23 (KN). Arg91 contributes to the UDP-N-acetyl-alpha-D-glucosamine binding site. The active-site Proton donor is Cys115. The residue at position 115 (Cys115) is a 2-(S-cysteinyl)pyruvic acid O-phosphothioketal. UDP-N-acetyl-alpha-D-glucosamine contacts are provided by Asp305 and Ile327.

The protein belongs to the EPSP synthase family. MurA subfamily.

It is found in the cytoplasm. The enzyme catalyses phosphoenolpyruvate + UDP-N-acetyl-alpha-D-glucosamine = UDP-N-acetyl-3-O-(1-carboxyvinyl)-alpha-D-glucosamine + phosphate. It participates in cell wall biogenesis; peptidoglycan biosynthesis. In terms of biological role, cell wall formation. Adds enolpyruvyl to UDP-N-acetylglucosamine. The chain is UDP-N-acetylglucosamine 1-carboxyvinyltransferase from Aeromonas salmonicida (strain A449).